The primary structure comprises 99 residues: MELKHVLMIIGIIILTIAPLVMYSGLTEEDGYFGGADGAASDLIMELSPEYEPWFEPFWEPPSGEIESLLFALQAAIGAIIIGYFFGYNKAKYDFESKN.

2 helical membrane passes run 6–26 and 68–88; these read VLMIIGIIILTIAPLVMYSGL and SLLFALQAAIGAIIIGYFFGY.

This sequence belongs to the CbiN family. Forms an energy-coupling factor (ECF) transporter complex composed of an ATP-binding protein (A component, CbiO), a transmembrane protein (T component, CbiQ) and 2 possible substrate-capture proteins (S components, CbiM and CbiN) of unknown stoichimetry.

Its subcellular location is the cell membrane. Its pathway is cofactor biosynthesis; adenosylcobalamin biosynthesis. Functionally, part of the energy-coupling factor (ECF) transporter complex CbiMNOQ involved in cobalt import. In Methanococcus vannielii (strain ATCC 35089 / DSM 1224 / JCM 13029 / OCM 148 / SB), this protein is Cobalt transport protein CbiN.